The primary structure comprises 184 residues: ATP synthase subunit b, chloroplastic (184 aa).

A helical membrane pass occupies residues 27–49 (LATNLINLSVVLGVLIFFGKGVL).

The protein belongs to the ATPase B chain family. F-type ATPases have 2 components, F(1) - the catalytic core - and F(0) - the membrane proton channel. F(1) has five subunits: alpha(3), beta(3), gamma(1), delta(1), epsilon(1). F(0) has four main subunits: a(1), b(1), b'(1) and c(10-14). The alpha and beta chains form an alternating ring which encloses part of the gamma chain. F(1) is attached to F(0) by a central stalk formed by the gamma and epsilon chains, while a peripheral stalk is formed by the delta, b and b' chains.

Its subcellular location is the plastid. It is found in the chloroplast thylakoid membrane. F(1)F(0) ATP synthase produces ATP from ADP in the presence of a proton or sodium gradient. F-type ATPases consist of two structural domains, F(1) containing the extramembraneous catalytic core and F(0) containing the membrane proton channel, linked together by a central stalk and a peripheral stalk. During catalysis, ATP synthesis in the catalytic domain of F(1) is coupled via a rotary mechanism of the central stalk subunits to proton translocation. Functionally, component of the F(0) channel, it forms part of the peripheral stalk, linking F(1) to F(0). This chain is ATP synthase subunit b, chloroplastic, found in Guizotia abyssinica (Niger).